A 313-amino-acid polypeptide reads, in one-letter code: uncharacterized protein (313 aa).

An N-acetyltransferase domain is found at 6–152 (YDILENPEPN…YHASMEKMTG (147 aa)).

Functionally, to the C-terminal of C.elegans F21C10.9. This is an uncharacterized protein from Caenorhabditis elegans.